Consider the following 127-residue polypeptide: Glycine cleavage system H protein (127 aa).

The region spanning 22-104 (KVRIGITHFA…YEKAWMIVVE (83 aa)) is the Lipoyl-binding domain. Position 63 is an N6-lipoyllysine (Lys-63).

This sequence belongs to the GcvH family. In terms of assembly, the glycine cleavage system is composed of four proteins: P, T, L and H. (R)-lipoate is required as a cofactor.

Its function is as follows. The glycine cleavage system catalyzes the degradation of glycine. The H protein shuttles the methylamine group of glycine from the P protein to the T protein. In terms of biological role, is also involved in protein lipoylation via its role as an octanoyl/lipoyl carrier protein intermediate. The sequence is that of Glycine cleavage system H protein from Bacillus pumilus (strain SAFR-032).